Consider the following 236-residue polypeptide: Purine nucleoside phosphorylase DeoD-type (236 aa).

H5 contacts a purine D-ribonucleoside. Residues G21, R25, R44, and 88-91 each bind phosphate; that span reads RVGS. A purine D-ribonucleoside is bound by residues 180 to 182 and 204 to 205; these read EME and SD. The Proton donor role is filled by D205.

This sequence belongs to the PNP/UDP phosphorylase family. Homohexamer; trimer of homodimers.

The enzyme catalyses a purine D-ribonucleoside + phosphate = a purine nucleobase + alpha-D-ribose 1-phosphate. The catalysed reaction is a purine 2'-deoxy-D-ribonucleoside + phosphate = a purine nucleobase + 2-deoxy-alpha-D-ribose 1-phosphate. Functionally, catalyzes the reversible phosphorolytic breakdown of the N-glycosidic bond in the beta-(deoxy)ribonucleoside molecules, with the formation of the corresponding free purine bases and pentose-1-phosphate. This chain is Purine nucleoside phosphorylase DeoD-type, found in Psychromonas ingrahamii (strain DSM 17664 / CCUG 51855 / 37).